We begin with the raw amino-acid sequence, 309 residues long: Protein FdhE homolog (309 aa).

The protein belongs to the FdhE family.

Its subcellular location is the cytoplasm. Necessary for formate dehydrogenase activity. The sequence is that of Protein FdhE homolog from Pectobacterium atrosepticum (strain SCRI 1043 / ATCC BAA-672) (Erwinia carotovora subsp. atroseptica).